A 555-amino-acid chain; its full sequence is Carboxypeptidase Y homolog A (555 aa).

Residues M1 to T17 form the signal peptide. Residues Y18–K136 constitute a propeptide that is removed on maturation. Cystine bridges form between C191–C430, C325–C339, C349–C372, C356–C365, and C394–C400. N-linked (GlcNAc...) asparagine glycosylation is present at N222. S278 is a catalytic residue. Residue D469 is part of the active site. N-linked (GlcNAc...) asparagine glycosylation occurs at N520. Residue H531 is part of the active site.

The protein belongs to the peptidase S10 family.

It localises to the vacuole. The enzyme catalyses Release of a C-terminal amino acid with broad specificity.. Functionally, vacuolar carboxypeptidase involved in degradation of small peptides. Digests preferentially peptides containing an aliphatic or hydrophobic residue in P1' position, as well as methionine, leucine or phenylalanine in P1 position of ester substrate. The polypeptide is Carboxypeptidase Y homolog A (cpyA) (Talaromyces marneffei (strain ATCC 18224 / CBS 334.59 / QM 7333) (Penicillium marneffei)).